We begin with the raw amino-acid sequence, 432 residues long: 3-isopropylmalate dehydratase large subunit (432 aa).

Residues cysteine 299, cysteine 364, and cysteine 367 each coordinate [4Fe-4S] cluster.

It belongs to the aconitase/IPM isomerase family. LeuC type 2 subfamily. As to quaternary structure, heterodimer of LeuC and LeuD. [4Fe-4S] cluster is required as a cofactor.

It catalyses the reaction (2R,3S)-3-isopropylmalate = (2S)-2-isopropylmalate. Its pathway is amino-acid biosynthesis; L-leucine biosynthesis; L-leucine from 3-methyl-2-oxobutanoate: step 2/4. Its function is as follows. Catalyzes the isomerization between 2-isopropylmalate and 3-isopropylmalate, via the formation of 2-isopropylmaleate. The sequence is that of 3-isopropylmalate dehydratase large subunit from Aquifex aeolicus (strain VF5).